A 180-amino-acid chain; its full sequence is Adenine phosphoribosyltransferase (180 aa).

The protein belongs to the purine/pyrimidine phosphoribosyltransferase family. Homodimer.

Its subcellular location is the cytoplasm. The catalysed reaction is AMP + diphosphate = 5-phospho-alpha-D-ribose 1-diphosphate + adenine. The protein operates within purine metabolism; AMP biosynthesis via salvage pathway; AMP from adenine: step 1/1. Functionally, catalyzes a salvage reaction resulting in the formation of AMP, that is energically less costly than de novo synthesis. This chain is Adenine phosphoribosyltransferase, found in Mycolicibacterium smegmatis (strain ATCC 700084 / mc(2)155) (Mycobacterium smegmatis).